A 398-amino-acid chain; its full sequence is tRNA N6-adenosine threonylcarbamoyltransferase (398 aa).

A divalent metal cation contacts are provided by H162, H166, and Y183. Substrate contacts are provided by residues 183–187, D215, G230, E234, and N329; that span reads YVSGG. An a divalent metal cation-binding site is contributed by D357.

The protein belongs to the KAE1 / TsaD family. In terms of assembly, component of the EKC/KEOPS complex composed of at least BUD32, CGI121, GON7, KAE1 and PCC1; the whole complex dimerizes. A divalent metal cation is required as a cofactor.

The protein localises to the cytoplasm. Its subcellular location is the nucleus. It catalyses the reaction L-threonylcarbamoyladenylate + adenosine(37) in tRNA = N(6)-L-threonylcarbamoyladenosine(37) in tRNA + AMP + H(+). Its function is as follows. Component of the EKC/KEOPS complex that is required for the formation of a threonylcarbamoyl group on adenosine at position 37 (t(6)A37) in tRNAs that read codons beginning with adenine. The complex is probably involved in the transfer of the threonylcarbamoyl moiety of threonylcarbamoyl-AMP (TC-AMP) to the N6 group of A37. KAE1 likely plays a direct catalytic role in this reaction, but requires other protein(s) of the complex to fulfill this activity. The EKC/KEOPS complex also promotes both telomere uncapping and telomere elongation. The complex is required for efficient recruitment of transcriptional coactivators. This Cryptococcus neoformans var. neoformans serotype D (strain B-3501A) (Filobasidiella neoformans) protein is tRNA N6-adenosine threonylcarbamoyltransferase.